Consider the following 252-residue polypeptide: uncharacterized protein (252 aa).

Composition is skewed to polar residues over residues Arg-108–Glu-122 and Met-136–Ser-153. A disordered region spans residues Arg-108 to Lys-252. The span at Thr-154–Lys-172 shows a compositional bias: basic and acidic residues. A compositionally biased stretch (polar residues) spans Val-201–Ser-226.

Its subcellular location is the cytoplasm. The protein localises to the mitochondrion. It is found in the nucleus. This is an uncharacterized protein from Schizosaccharomyces pombe (strain 972 / ATCC 24843) (Fission yeast).